The following is a 288-amino-acid chain: Ribosome biogenesis GTPase A (288 aa).

The region spanning 14 to 179 (RRQVTEKLKL…LLDTPGILWP (166 aa)) is the CP-type G domain. GTP is bound by residues 58–61 (NKVD), 131–136 (NVGKST), and Gly175.

It belongs to the TRAFAC class YlqF/YawG GTPase family. MTG1 subfamily. As to quaternary structure, interacts with ctc. Interacts with the immature 50S ribosome subunit. 2 molecules of rbgA bind to one 50S subunit.

It localises to the cytoplasm. Functionally, essential protein that is required for a late step of 50S ribosomal subunit assembly. Has GTPase activity that is stimulated by interaction with the immature 50S ribosome subunit. Binds to the 23S rRNA. Required for the association of ribosomal proteins rplP and rpmA with the large subunit. The protein is Ribosome biogenesis GTPase A of Priestia megaterium (strain DSM 319 / IMG 1521) (Bacillus megaterium).